The following is a 107-amino-acid chain: MSESSSKSSQPLASKQEKDGTEKRGRGRPRKQPPVSPGTALVGSQKEPSEVPTPKRPRGRPKGSKNKGAAKTRKATTAPGRKPRGRPKKLEKEEEEGISQESSEEEQ.

The tract at residues 1–107 is disordered; it reads MSESSSKSSQ…ISQESSEEEQ (107 aa). At Ser2 the chain carries N-acetylserine. The residue at position 7 (Lys7) is an N6-acetyllysine. Ser8 carries the ADP-ribosylserine modification. ADP-ribosylserine; alternate is present on Ser9. Position 9 is a phosphoserine; alternate (Ser9). Position 15 is an N6-acetyllysine; alternate (Lys15). Lys15 participates in a covalent cross-link: Glycyl lysine isopeptide (Lys-Gly) (interchain with G-Cter in SUMO2); alternate. A compositionally biased stretch (basic and acidic residues) spans 15 to 24; that stretch reads KQEKDGTEKR. Positions 21-31 form a DNA-binding region, a.T hook 1; it reads TEKRGRGRPRK. The residue at position 26 (Arg26) is an Asymmetric dimethylarginine; alternate. Arg26 carries the omega-N-methylarginine; alternate modification. Arg26 bears the Symmetric dimethylarginine; alternate mark. Ser36 is subject to Phosphoserine; by HIPK2 and CDC2. Thr39 is subject to Phosphothreonine. A phosphoserine mark is found at Ser44 and Ser49. Thr53 bears the Phosphothreonine; by HIPK2 and CDC2 mark. 2 consecutive DNA-binding regions (a.T hook) follow at residues 53-63 and 78-89; these read TPKRPRGRPKG and APGRKPRGRPKK. The segment at 53-77 is interaction with HIPK2; it reads TPKRPRGRPKGSKNKGAAKTRKATT. A compositionally biased stretch (basic residues) spans 55 to 74; that stretch reads KRPRGRPKGSKNKGAAKTRK. 2 positions are modified to asymmetric dimethylarginine; by PRMT6; alternate: Arg58 and Arg60. Omega-N-methylarginine; by PRMT6; alternate occurs at positions 58 and 60. Positions 93–107 are enriched in acidic residues; it reads EEEEGISQESSEEEQ. 3 positions are modified to phosphoserine: Ser99, Ser102, and Ser103.

The protein belongs to the HMGA family. Interacts with HIPK2. In terms of processing, isoforms HMG-I and HMG-Y can be phosphorylated by HIPK2. Phosphorylation may modulate DNA-binding affinity. Methylation at Arg-58 is mutually exclusive with methylation at Arg-60.

Its subcellular location is the nucleus. It is found in the chromosome. HMG-I/Y bind preferentially to the minor groove of A+T rich regions in double-stranded DNA. It is suggested that these proteins could function in nucleosome phasing and in the 3'-end processing of mRNA transcripts. They are also involved in the transcription regulation of genes containing, or in close proximity to A+T-rich regions. The chain is High mobility group protein HMG-I/HMG-Y (HMGA1) from Cricetulus griseus (Chinese hamster).